The primary structure comprises 233 residues: Large ribosomal subunit protein uL1 (233 aa).

The protein belongs to the universal ribosomal protein uL1 family. Part of the 50S ribosomal subunit.

Binds directly to 23S rRNA. The L1 stalk is quite mobile in the ribosome, and is involved in E site tRNA release. Its function is as follows. Protein L1 is also a translational repressor protein, it controls the translation of the L11 operon by binding to its mRNA. This is Large ribosomal subunit protein uL1 from Vibrio vulnificus (strain CMCP6).